The sequence spans 176 residues: RNA pyrophosphohydrolase (176 aa).

The Nudix hydrolase domain occupies 6–149 (GYRPNVGIVI…KRDVYRRVMK (144 aa)). The Nudix box motif lies at 38 to 59 (GGINPGESAEQAMYRELFEEVG).

Belongs to the Nudix hydrolase family. RppH subfamily. A divalent metal cation serves as cofactor.

Its function is as follows. Accelerates the degradation of transcripts by removing pyrophosphate from the 5'-end of triphosphorylated RNA, leading to a more labile monophosphorylated state that can stimulate subsequent ribonuclease cleavage. The polypeptide is RNA pyrophosphohydrolase (Shigella boydii serotype 4 (strain Sb227)).